The following is a 566-amino-acid chain: Putative lipase ATG15 (566 aa).

At 1 to 17 (MGSKHKKNASKSLRAFS) the chain is on the cytoplasmic side. A helical; Signal-anchor for type II membrane protein transmembrane segment spans residues 18–38 (FIILSASIALVYIFNPVKLIF). Over 39–566 (PSSIIRFHHG…CVEWGDEEDA (528 aa)) the chain is Lumenal. 2 N-linked (GlcNAc...) asparagine glycosylation sites follow: Asn264 and Asn348. The Charge relay system role is filled by Ser366. A glycan (N-linked (GlcNAc...) asparagine) is linked at Asn483. Residues 507–545 (DSLDDEPPLPNPLRPGKPSTTSSSQHHTSTTTTTETSRP) are disordered. Low complexity predominate over residues 522–543 (GKPSTTSSSQHHTSTTTTTETS).

The protein belongs to the AB hydrolase superfamily. Lipase family. Binds to both phosphatidylinositol (PI) and phosphatidylinositol 3,5-bisphosphate (PIP2).

The protein resides in the endosome. It is found in the multivesicular body membrane. It localises to the prevacuolar compartment membrane. The catalysed reaction is a triacylglycerol + H2O = a diacylglycerol + a fatty acid + H(+). Functionally, lipase which is essential for lysis of subvacuolar cytoplasm to vacuole targeted bodies and intravacuolar autophagic bodies. Involved in the lysis of intravacuolar multivesicular body (MVB) vesicles. The intravacuolar membrane disintegration by ATG15 is critical to life span extension. The polypeptide is Putative lipase ATG15 (ATG15) (Meyerozyma guilliermondii (strain ATCC 6260 / CBS 566 / DSM 6381 / JCM 1539 / NBRC 10279 / NRRL Y-324) (Yeast)).